The primary structure comprises 271 residues: Mannosyl-3-phosphoglycerate phosphatase (271 aa).

The Nucleophile role is filled by Asp-13. Mg(2+) is bound by residues Asp-13, Asp-15, and Asp-214.

It belongs to the HAD-like hydrolase superfamily. MPGP family. Requires Mg(2+) as cofactor.

It is found in the cytoplasm. It carries out the reaction 2-O-(alpha-D-mannosyl)-3-phosphoglycerate + H2O = (2R)-2-O-(alpha-D-mannosyl)-glycerate + phosphate. This Escherichia coli O17:K52:H18 (strain UMN026 / ExPEC) protein is Mannosyl-3-phosphoglycerate phosphatase.